The sequence spans 213 residues: Histone H1.3 (213 aa).

Serine 1 bears the N-acetylserine mark. Low complexity predominate over residues 1–15; it reads SEAPAETAAPAPAEK. Residues 1–41 form a disordered region; that stretch reads SEAPAETAAPAPAEKSPAKKKKAAKKPGAGAAKRKAAGPPV. The residue at position 15 (lysine 15) is an N6-acetyllysine. N6-(beta-hydroxybutyryl)lysine occurs at positions 35 and 53. The H15 domain maps to 37–110; the sequence is AGPPVSELIT…GASGSFKLDK (74 aa). Citrulline is present on arginine 55. Residues lysine 65, lysine 86, and lysine 91 each carry the N6-(beta-hydroxybutyryl)lysine modification. The disordered stretch occupies residues 92–213; it reads GTLVETKGTG…AKKTAAKKKK (122 aa). Serine 105 carries the phosphoserine modification. Lysine 107 is subject to N6-(beta-hydroxybutyryl)lysine. Basic and acidic residues predominate over residues 107-119; sequence KLDKKAASGEAKP. 3 stretches are compositionally biased toward basic residues: residues 120–131, 138–170, and 179–213; these read KPKKAGAAKPKK, KKPK…KVAK, and KSPK…KKKK.

This sequence belongs to the histone H1/H5 family. Post-translationally, H1 histones are progressively phosphorylated during the cell cycle, becoming maximally phosphorylated during late G2 phase and M phase, and being dephosphorylated sharply thereafter. Citrullination at Arg-55 (H1R54ci) by PADI4 takes place within the DNA-binding site of H1 and results in its displacement from chromatin and global chromatin decondensation, thereby promoting pluripotency and stem cell maintenance.

It localises to the nucleus. The protein localises to the chromosome. Functionally, histones H1 are necessary for the condensation of nucleosome chains into higher-order structures. In Oryctolagus cuniculus (Rabbit), this protein is Histone H1.3.